We begin with the raw amino-acid sequence, 256 residues long: tRNA pseudouridine synthase A (256 aa).

The active-site Nucleophile is the aspartate 55. Substrate is bound at residue tyrosine 113.

Belongs to the tRNA pseudouridine synthase TruA family. As to quaternary structure, homodimer.

The catalysed reaction is uridine(38/39/40) in tRNA = pseudouridine(38/39/40) in tRNA. In terms of biological role, formation of pseudouridine at positions 38, 39 and 40 in the anticodon stem and loop of transfer RNAs. The polypeptide is tRNA pseudouridine synthase A (Limosilactobacillus reuteri (strain DSM 20016) (Lactobacillus reuteri)).